The following is a 90-amino-acid chain: Cuticle protein 9.5 (90 aa).

Functionally, component of the cuticle of migratory locust which contains more than 100 different structural proteins. The sequence is that of Cuticle protein 9.5 from Locusta migratoria (Migratory locust).